A 453-amino-acid polypeptide reads, in one-letter code: Putative long chain fatty acid-CoA ligase VraA (453 aa).

Belongs to the ATP-dependent AMP-binding enzyme family.

The protein is Putative long chain fatty acid-CoA ligase VraA (vraA) of Staphylococcus epidermidis (strain ATCC 35984 / DSM 28319 / BCRC 17069 / CCUG 31568 / BM 3577 / RP62A).